Reading from the N-terminus, the 87-residue chain is Small ribosomal subunit protein bS20 (87 aa).

The interval 1 to 25 (MANIKSAKKRAVQSEKHRLHNASRR) is disordered.

Belongs to the bacterial ribosomal protein bS20 family.

Functionally, binds directly to 16S ribosomal RNA. The chain is Small ribosomal subunit protein bS20 from Baumannia cicadellinicola subsp. Homalodisca coagulata.